A 1040-amino-acid chain; its full sequence is Multidrug resistance protein MdtB (1040 aa).

12 consecutive transmembrane segments (helical) span residues 25-45 (LLMV…PVAA), 342-362 (DTQF…YLFL), 369-389 (IIPG…MVFL), 396-416 (LTLM…IVVI), 440-460 (IGFT…PLLF), 472-492 (FAVT…TLTP), 537-557 (WLTL…WVFI), 863-883 (LGST…VLGV), 888-908 (FIHP…ALLA), 911-931 (IAGS…IGIV), 967-987 (PILM…LSTG), and 998-1018 (IGMV…TPVI).

Belongs to the resistance-nodulation-cell division (RND) (TC 2.A.6) family. MdtB subfamily. Part of a tripartite efflux system composed of MdtA, MdtB and MdtC. MdtB forms a heteromultimer with MdtC.

The protein resides in the cell inner membrane. The sequence is that of Multidrug resistance protein MdtB from Citrobacter koseri (strain ATCC BAA-895 / CDC 4225-83 / SGSC4696).